The chain runs to 341 residues: Ribosomal RNA small subunit methyltransferase H (341 aa).

Residues 47–49, Asp64, Phe91, Asp109, and Gln116 each bind S-adenosyl-L-methionine; that span reads GGY. Residues 292-319 form a disordered region; that stretch reads VAASEEEASRNPRARSAKLRAGVRTEAP.

The protein belongs to the methyltransferase superfamily. RsmH family.

The protein localises to the cytoplasm. The enzyme catalyses cytidine(1402) in 16S rRNA + S-adenosyl-L-methionine = N(4)-methylcytidine(1402) in 16S rRNA + S-adenosyl-L-homocysteine + H(+). Specifically methylates the N4 position of cytidine in position 1402 (C1402) of 16S rRNA. The sequence is that of Ribosomal RNA small subunit methyltransferase H from Rhizobium meliloti (strain 1021) (Ensifer meliloti).